The following is a 459-amino-acid chain: MLKIFNTLTREKEVFKPISENKVGMYVCGVTVYDLCHIGHGRTFVCFDVIARYLRYLGYELTYVRNITDVDDKIIRRSLENRETCEQLVDRMVVEMYKDFDALNVLRPDFEPRATHHIAEIIALVEKLIARGHAYVADNGDVMFDVESFKEYGKLSRQDLTQLQAGARVEISEIKKNPMDFVLWKMSKENEPSWNSPWGAGRPGWHIECSAMNCKHLGEHFDIHGGGSDLMFPHHENEIAQSCCAHGNRYVNYWIHSGMIMVDKEKMSKSLGNFFTIRDVLNHYDAESVRYFLLTAHYRSQLNYSEENLDLAHGALERLYTALRGTDKSAVAFGGENFIAQFTEAMNDDFNTPNAISVLFEMAREINRLKNEDKLLADGLAARLRELAGILGLLEQDPEDFLQAGSDDAEIAKIEALIKQRNDARQAKDWARADAARNELTTMGVILEDGSNGTMWRKM.

C28 provides a ligand contact to Zn(2+). The 'HIGH' region motif lies at V30–H40. The Zn(2+) site is built by C209, H234, and E238. The 'KMSKS' region motif lies at K266 to S270. K269 contacts ATP.

The protein belongs to the class-I aminoacyl-tRNA synthetase family. As to quaternary structure, monomer. Zn(2+) serves as cofactor.

The protein localises to the cytoplasm. It carries out the reaction tRNA(Cys) + L-cysteine + ATP = L-cysteinyl-tRNA(Cys) + AMP + diphosphate. This is Cysteine--tRNA ligase from Histophilus somni (strain 129Pt) (Haemophilus somnus).